The sequence spans 356 residues: MGACLSAEQSHDTPEYKRSKALDRRIKEDEKNLSREVKLLLLGAGESGKSTILKSMRIIHHIPFTDEERENFRRLVFLNLVQGMKTILDVMEEWSIDFQDDSNIDHLLLFVSYPDISEDEPFPTNYLVALKDLWLDQGVQSVYRRGNEAAVPDNMSYYYTDLDRLFSPSYIPSEDDILRCRNKTTGIIETTFPLQDHVYRIFDVGGQRSERKKWIHCFENVTAVLFCVALSGYDSCLVEDKDSNQMQEALMLFDSICNSKWFARTSMILFLNKVDVFRQKIAYSSIKHYFPDYDGDDQDFNAARSYFKARFCRLNRSVNKEIYPSFTNATDVSLLKIVMASVTDIILTNNLRDIVL.

G2 is lipidated: N-myristoyl glycine. A lipid anchor (S-palmitoyl cysteine) is attached at C4. Residues 35–356 form the G-alpha domain; it reads REVKLLLLGA…LTNNLRDIVL (322 aa). Positions 38–51 are G1 motif; that stretch reads KLLLLGAGESGKST. Residues E46, S47, G48, K49, S50, T51, D153, L178, T184, G206, N272, K273, D275, and A329 each contribute to the GTP site. S50 is a binding site for Mg(2+). The G2 motif stretch occupies residues 176 to 184; sequence DILRCRNKT. T184 is a Mg(2+) binding site. The segment at 199–208 is G3 motif; it reads YRIFDVGGQR. Residues 268-275 form a G4 motif region; the sequence is ILFLNKVD. The interval 327 to 332 is G5 motif; it reads TNATDV.

This sequence belongs to the G-alpha family. In terms of assembly, g proteins are composed of 3 units; alpha, beta and gamma. The alpha chain contains the guanine nucleotide binding site. The cofactor is Mg(2+).

Functionally, guanine nucleotide-binding proteins (G proteins) are involved as modulators or transducers in various transmembrane signaling systems. The chain is Guanine nucleotide-binding protein alpha-2 subunit (GPA2) from Mycosarcoma maydis (Corn smut fungus).